A 2925-amino-acid chain; its full sequence is Otogelin (2925 aa).

The signal sequence occupies residues 1–25 (MGVLASALCWLLCVWLPWGEQAAES). A disordered region spans residues 39–69 (GRSGARGMRNVKGMRNGPAQTRVSSSSSHQE). Polar residues predominate over residues 56–69 (PAQTRVSSSSSHQE). The EGF-like domain occupies 102–139 (HRAKCAPSYLFSCFNGGECVHPAFCDCRRFNATGPRCQ). Disulfide bonds link C106–C120, C114–C126, C128–C138, C152–C285, and C199–C206. Residues 150–322 (SICRAWGQHH…SWQEQAPNQP (173 aa)) form the VWFD 1 domain. A disordered region spans residues 316-335 (EQAPNQPPGPTTSSLPRPPC). The span at 326 to 335 (TTSSLPRPPC) shows a compositional bias: polar residues. Positions 512–688 (AECSVTGDIH…NSWKTLSACS (177 aa)) constitute a VWFD 2 domain. Intrachain disulfides connect C514/C652, C536/C687, and C558/C566. One can recognise a TIL domain in the interval 780-844 (CEASKEYSPC…ADLCVPRNQC (65 aa)). N914 carries N-linked (GlcNAc...) asparagine glycosylation. The VWFD 3 domain occupies 984–1152 (STCTAYGDRH…SWAAVECPDT (169 aa)). 2 disulfides stabilise this stretch: C986/C1115 and C1030/C1037. Residues 1476–1540 (LGNETLPPSQ…PVVSPGPTQT (65 aa)) form a disordered region. Residue N1478 is glycosylated (N-linked (GlcNAc...) asparagine). Low complexity predominate over residues 1502–1528 (PRTPTHRPALTPAAPLTTALNPPVTAT). N-linked (GlcNAc...) asparagine glycosylation occurs at N1612. 3 disordered regions span residues 1636–1679 (GHGS…HKAV), 1693–1715 (VPQPTQAQSASSPSTPLTVAGTA), and 1737–1788 (KGEA…ASLS). The segment covering 1650–1659 (SLTASPSSRP) has biased composition (polar residues). Residues 1694 to 1708 (PQPTQAQSASSPSTP) show a composition bias toward low complexity. Residues 1751-1764 (SPQPHPLPSAPPRP) show a composition bias toward pro residues. The 180-residue stretch at 2110-2289 (CRCSIFPDLS…SWQVPSSLTS (180 aa)) folds into the VWFD 4 domain. Disulfide bonds link C2112–C2249, C2840–C2889, C2854–C2903, C2865–C2920, and C2869–C2922. Residues 2840-2925 (CKKVTIRMTI…EPTDCACQWS (86 aa)) enclose the CTCK domain.

This sequence belongs to the otogelin family. N-glycosylated. Not O-glycosylated.

The protein localises to the apical cell membrane. It is found in the secreted. It localises to the extracellular space. Functionally, glycoprotein specific to acellular membranes of the inner ear. May be required for the anchoring of the otoconial membranes and cupulae to the underlying neuroepithelia in the vestibule. May be involved in the organization and/or stabilization of the fibrillar network that compose the tectorial membrane in the cochlea. May play a role in mechanotransduction processes. The chain is Otogelin (OTOG) from Homo sapiens (Human).